A 422-amino-acid chain; its full sequence is UDP-N-acetylglucosamine 1-carboxyvinyltransferase (422 aa).

A phosphoenolpyruvate-binding site is contributed by 23–24 (KN). Residue Arg-92 participates in UDP-N-acetyl-alpha-D-glucosamine binding. Cys-116 functions as the Proton donor in the catalytic mechanism. A 2-(S-cysteinyl)pyruvic acid O-phosphothioketal modification is found at Cys-116. UDP-N-acetyl-alpha-D-glucosamine is bound by residues 121–125 (RPVDL), 161–164 (KVSV), Asp-306, and Ile-328.

Belongs to the EPSP synthase family. MurA subfamily.

It localises to the cytoplasm. It carries out the reaction phosphoenolpyruvate + UDP-N-acetyl-alpha-D-glucosamine = UDP-N-acetyl-3-O-(1-carboxyvinyl)-alpha-D-glucosamine + phosphate. The protein operates within cell wall biogenesis; peptidoglycan biosynthesis. Its function is as follows. Cell wall formation. Adds enolpyruvyl to UDP-N-acetylglucosamine. The polypeptide is UDP-N-acetylglucosamine 1-carboxyvinyltransferase (Aliivibrio salmonicida (strain LFI1238) (Vibrio salmonicida (strain LFI1238))).